Reading from the N-terminus, the 126-residue chain is uncharacterized protein (126 aa).

Positions 1–46 (MREEEAAAVVTVPQAGRDGEQPGPPAGLGCAAVRGEPGGGGPQESR) are disordered.

It is found in the cytoplasm. Its subcellular location is the cytoskeleton. It localises to the cilium basal body. This is an uncharacterized protein from Bos taurus (Bovine).